A 390-amino-acid chain; its full sequence is Lipid-A-disaccharide synthase (390 aa).

This sequence belongs to the LpxB family.

It carries out the reaction a lipid X + a UDP-2-N,3-O-bis[(3R)-3-hydroxyacyl]-alpha-D-glucosamine = a lipid A disaccharide + UDP + H(+). The protein operates within bacterial outer membrane biogenesis; LPS lipid A biosynthesis. Its function is as follows. Condensation of UDP-2,3-diacylglucosamine and 2,3-diacylglucosamine-1-phosphate to form lipid A disaccharide, a precursor of lipid A, a phosphorylated glycolipid that anchors the lipopolysaccharide to the outer membrane of the cell. This is Lipid-A-disaccharide synthase from Rickettsia felis (strain ATCC VR-1525 / URRWXCal2) (Rickettsia azadi).